We begin with the raw amino-acid sequence, 155 residues long: Small ribosomal subunit protein uS7cz/uS7cy (155 aa).

This sequence belongs to the universal ribosomal protein uS7 family. In terms of assembly, part of the 30S ribosomal subunit.

It localises to the plastid. One of the primary rRNA binding proteins, it binds directly to 16S rRNA where it nucleates assembly of the head domain of the 30S subunit. This chain is Small ribosomal subunit protein uS7cz/uS7cy (rps7-A), found in Epifagus virginiana (Beechdrops).